Here is a 386-residue protein sequence, read N- to C-terminus: uncharacterized protein (386 aa).

An F-box domain is found at K29–E76.

This is an uncharacterized protein from Caenorhabditis elegans.